The chain runs to 317 residues: Putative HTH-type transcriptional regulatory protein TGAM_1316 (317 aa).

An HTH cro/C1-type domain is found at 131–189; that stretch reads LKKLREKHGYSVGELASLLGVSRKSLLNYERNEQAVSLEVALRMEELFDEPIAEPIDVL. Residues 142 to 161 constitute a DNA-binding region (H-T-H motif); that stretch reads VGELASLLGVSRKSLLNYER.

This is Putative HTH-type transcriptional regulatory protein TGAM_1316 from Thermococcus gammatolerans (strain DSM 15229 / JCM 11827 / EJ3).